Consider the following 343-residue polypeptide: Multidrug resistance protein MdtN (343 aa).

Residues 1 to 12 (MESTPKKAPRSK) are Cytoplasmic-facing. A helical; Signal-anchor for type II membrane protein membrane pass occupies residues 13–33 (FPALLVVALALVALVFVIWRV). At 34–343 (DSAPSTNDAY…ASAVANLEPQ (310 aa)) the chain is on the periplasmic side.

Belongs to the membrane fusion protein (MFP) (TC 8.A.1) family. Could be part of a tripartite efflux system composed of MdtN, MdtO and MdtP.

Its subcellular location is the cell inner membrane. Functionally, could be involved in resistance to puromycin, acriflavine and tetraphenylarsonium chloride. The chain is Multidrug resistance protein MdtN (mdtN) from Escherichia coli O6:H1 (strain CFT073 / ATCC 700928 / UPEC).